The chain runs to 80 residues: Clavanin-D (80 aa).

The first 19 residues, 1 to 19 (MKTTILILLILGLGINAKS), serve as a signal peptide directing secretion. A propeptide spanning residues 20–29 (LEERKSEEEK) is cleaved from the precursor. Phe52 carries the post-translational modification Phenylalanine amide. Positions 54 to 80 (DDQQDNGKFYGHYAEDNGKHWYDTGDQ) are excised as a propeptide.

In terms of tissue distribution, hemocytes and pharyngeal tissues.

Its subcellular location is the secreted. Functionally, has antimicrobial activity against E.coli, L.monocytogenes and C.albicans. The polypeptide is Clavanin-D (Styela clava (Sea squirt)).